Reading from the N-terminus, the 338-residue chain is L-serine dehydratase (338 aa).

Position 39 is an N6-(pyridoxal phosphate)lysine (Lys39).

Belongs to the serine/threonine dehydratase family. The cofactor is pyridoxal 5'-phosphate.

Its subcellular location is the cytoplasm. The catalysed reaction is L-serine = pyruvate + NH4(+). It participates in carbohydrate biosynthesis; gluconeogenesis. The chain is L-serine dehydratase (SDL1) from Saccharomyces cerevisiae (Baker's yeast).